The chain runs to 449 residues: Glucose-6-phosphate isomerase (449 aa).

The active-site Proton donor is the E290. Active-site residues include H311 and K425.

The protein belongs to the GPI family.

The protein localises to the cytoplasm. It catalyses the reaction alpha-D-glucose 6-phosphate = beta-D-fructose 6-phosphate. Its pathway is carbohydrate biosynthesis; gluconeogenesis. It participates in carbohydrate degradation; glycolysis; D-glyceraldehyde 3-phosphate and glycerone phosphate from D-glucose: step 2/4. In terms of biological role, catalyzes the reversible isomerization of glucose-6-phosphate to fructose-6-phosphate. The protein is Glucose-6-phosphate isomerase of Exiguobacterium sibiricum (strain DSM 17290 / CCUG 55495 / CIP 109462 / JCM 13490 / 255-15).